The sequence spans 330 residues: Lymphocyte-specific protein 1 (330 aa).

2 stretches are compositionally biased toward basic and acidic residues: residues 1-20 (MAEAAIDPRCEEQEELHAED) and 37-62 (AREQRQRERERQLQDQDKDKEDDGGH). 2 disordered regions span residues 1-246 (MAEA…SIEL) and 281-302 (DMSKKSLWEQKGGSKISSTIKS). The segment covering 66-77 (QPGQQTLISLKS) has biased composition (polar residues). S77 and S78 each carry phosphoserine; by CK2. The segment covering 113-135 (QSERPEEKQTEESSHQAKVHLEE) has biased composition (basic and acidic residues). At T166 the chain carries Phosphothreonine. Residues S168, S179, S180, and S184 each carry the phosphoserine modification. Composition is skewed to polar residues over residues 206–215 (VKKSQPTLPI) and 223–242 (QQYTQATESSGRTPKLSRQP). A Phosphoserine; by MAPKAPK2 modification is found at S243. Low complexity predominate over residues 291–302 (KGGSKISSTIKS). At K318 the chain carries N6-acetyllysine.

In terms of processing, phosphorylated by casein kinase II, protein kinase C and MAPKAPK2. Phosphorylation by PKC induces translocation from membrane to cytoplasm. Phosphorylation by MAPKAPK2 may regulate neutrophil chemotaxis. In terms of tissue distribution, isoform 1 is expressed in normal mouse B and T-lymphocytes and in transformed B-cells but not (or in smaller amounts) in nine T-lymphoma lines tested. Isoform 2 is expressed in non-lymphoid cell lines (myocytes, stromal cells, fibroblasts).

The protein resides in the cell membrane. In terms of biological role, may play a role in mediating neutrophil activation and chemotaxis. This chain is Lymphocyte-specific protein 1 (Lsp1), found in Mus musculus (Mouse).